Consider the following 146-residue polypeptide: NADH-ubiquinone oxidoreductase chain 6 (146 aa).

Transmembrane regions (helical) follow at residues 10-30 (ILAI…LLFV), 43-63 (LMGI…FLFI), 81-101 (VIVL…PIAI), and 124-144 (APML…AIAM).

Belongs to the complex I subunit 6 family.

The protein localises to the mitochondrion membrane. The enzyme catalyses a ubiquinone + NADH + 5 H(+)(in) = a ubiquinol + NAD(+) + 4 H(+)(out). Its function is as follows. Core subunit of the mitochondrial membrane respiratory chain NADH dehydrogenase (Complex I) that is believed to belong to the minimal assembly required for catalysis. Complex I functions in the transfer of electrons from NADH to the respiratory chain. The immediate electron acceptor for the enzyme is believed to be ubiquinone. This is NADH-ubiquinone oxidoreductase chain 6 (NAD6) from Candida albicans (strain SC5314 / ATCC MYA-2876) (Yeast).